We begin with the raw amino-acid sequence, 152 residues long: UPF0266 membrane protein YobD (152 aa).

3 consecutive transmembrane segments (helical) span residues 6–26 (LVLI…QFIM), 45–65 (VDSV…VTSH), and 67–87 (AQMT…IFWI).

Belongs to the UPF0266 family.

The protein resides in the cell inner membrane. This chain is UPF0266 membrane protein YobD, found in Salmonella paratyphi B (strain ATCC BAA-1250 / SPB7).